Reading from the N-terminus, the 81-residue chain is Photosystem I iron-sulfur center (81 aa).

2 consecutive 4Fe-4S ferredoxin-type domains span residues Ser2 to Trp31 and Ile39 to Tyr68. [4Fe-4S] cluster contacts are provided by Cys11, Cys14, Cys17, Cys21, Cys48, Cys51, Cys54, and Cys58.

The eukaryotic PSI reaction center is composed of at least 11 subunits. [4Fe-4S] cluster is required as a cofactor.

Its subcellular location is the plastid. The protein resides in the chloroplast thylakoid membrane. It carries out the reaction reduced [plastocyanin] + hnu + oxidized [2Fe-2S]-[ferredoxin] = oxidized [plastocyanin] + reduced [2Fe-2S]-[ferredoxin]. Its function is as follows. Apoprotein for the two 4Fe-4S centers FA and FB of photosystem I (PSI); essential for photochemical activity. FB is the terminal electron acceptor of PSI, donating electrons to ferredoxin. The C-terminus interacts with PsaA/B/D and helps assemble the protein into the PSI complex. Required for binding of PsaD and PsaE to PSI. PSI is a plastocyanin/cytochrome c6-ferredoxin oxidoreductase, converting photonic excitation into a charge separation, which transfers an electron from the donor P700 chlorophyll pair to the spectroscopically characterized acceptors A0, A1, FX, FA and FB in turn. In Nephroselmis olivacea (Green alga), this protein is Photosystem I iron-sulfur center.